The sequence spans 298 residues: Glutamyl-Q tRNA(Asp) synthetase (298 aa).

Residues 9–13 (RFAPS) and Glu-45 each bind L-glutamate. The 'HIGH' region signature appears at 12–22 (PSPSGELHFGS). Cys-101, Cys-103, Tyr-115, and Cys-119 together coordinate Zn(2+). Positions 172 and 190 each coordinate L-glutamate. Positions 228–232 (KLSKQ) match the 'KMSKS' region motif. Position 231 (Lys-231) interacts with ATP.

Belongs to the class-I aminoacyl-tRNA synthetase family. GluQ subfamily. Zn(2+) is required as a cofactor.

Its function is as follows. Catalyzes the tRNA-independent activation of glutamate in presence of ATP and the subsequent transfer of glutamate onto a tRNA(Asp). Glutamate is transferred on the 2-amino-5-(4,5-dihydroxy-2-cyclopenten-1-yl) moiety of the queuosine in the wobble position of the QUC anticodon. This Salmonella choleraesuis (strain SC-B67) protein is Glutamyl-Q tRNA(Asp) synthetase.